The sequence spans 96 residues: MGNLISTCSFSSRVNSTAKITDSSIWYPQPDQHISIRTFRELNQAPTSSPTSTRTEMFLNGVLSRSTDDLQGEDSRQPMTLTPRQLTQEVSRRLLM.

A lipid anchor (N-myristoyl glycine; by host) is attached at Gly2. A disordered region spans residues 66-96 (STDDLQGEDSRQPMTLTPRQLTQEVSRRLLM). The span at 77-89 (QPMTLTPRQLTQE) shows a compositional bias: polar residues.

The protein belongs to the geminiviridae protein AC4/C4 family.

The protein localises to the host cell membrane. In terms of biological role, pathogenicity determinant. May act as a suppressor of RNA-mediated gene silencing, also known as post-transcriptional gene silencing (PTGS), a mechanism of plant viral defense that limits the accumulation of viral RNAs. The chain is Protein C4 from Cynanchum acutum (Tomato).